The chain runs to 176 residues: Ribosome maturation factor RimM (176 aa).

The PRC barrel domain maps to 104–176 (EDEYYFYEIL…KIIAKEMEWI (73 aa)).

This sequence belongs to the RimM family. In terms of assembly, binds ribosomal protein uS19.

Its subcellular location is the cytoplasm. Functionally, an accessory protein needed during the final step in the assembly of 30S ribosomal subunit, possibly for assembly of the head region. Essential for efficient processing of 16S rRNA. May be needed both before and after RbfA during the maturation of 16S rRNA. It has affinity for free ribosomal 30S subunits but not for 70S ribosomes. The chain is Ribosome maturation factor RimM from Thermotoga maritima (strain ATCC 43589 / DSM 3109 / JCM 10099 / NBRC 100826 / MSB8).